A 325-amino-acid polypeptide reads, in one-letter code: Probable cell division protein WhiA (325 aa).

Positions 273–306 (SLEELGALADPPLTKDAVAGRIRRLLALADKRAN) form a DNA-binding region, H-T-H motif.

The protein belongs to the WhiA family.

In terms of biological role, involved in cell division and chromosome segregation. The protein is Probable cell division protein WhiA of Frankia alni (strain DSM 45986 / CECT 9034 / ACN14a).